The sequence spans 178 residues: Large ribosomal subunit protein uL6 (178 aa).

The protein belongs to the universal ribosomal protein uL6 family. Part of the 50S ribosomal subunit.

Its function is as follows. This protein binds to the 23S rRNA, and is important in its secondary structure. It is located near the subunit interface in the base of the L7/L12 stalk, and near the tRNA binding site of the peptidyltransferase center. The chain is Large ribosomal subunit protein uL6 from Francisella tularensis subsp. mediasiatica (strain FSC147).